A 265-amino-acid polypeptide reads, in one-letter code: Mlc titration factor A (265 aa).

Zn(2+)-binding residues include H111, H148, H152, and E211.

Belongs to the MtfA family. As to quaternary structure, interacts with Mlc. Requires Zn(2+) as cofactor.

It is found in the cytoplasm. Its function is as follows. Involved in the modulation of the activity of the glucose-phosphotransferase system (glucose-PTS). Interacts with the transcriptional repressor Mlc, preventing its interaction with DNA and leading to the modulation of expression of genes regulated by Mlc, including ptsG, which encodes the PTS system glucose-specific EIICB component. Shows zinc-dependent metallopeptidase activity. The chain is Mlc titration factor A from Escherichia coli O6:K15:H31 (strain 536 / UPEC).